A 166-amino-acid polypeptide reads, in one-letter code: NADH-quinone oxidoreductase subunit E (166 aa).

4 residues coordinate [2Fe-2S] cluster: cysteine 92, cysteine 97, cysteine 133, and cysteine 137.

Belongs to the complex I 24 kDa subunit family. Composed of 13 different subunits. Subunits NuoCD, E, F, and G constitute the peripheral sector of the complex. It depends on [2Fe-2S] cluster as a cofactor.

It carries out the reaction a quinone + NADH + 5 H(+)(in) = a quinol + NAD(+) + 4 H(+)(out). Its function is as follows. NDH-1 shuttles electrons from NADH, via FMN and iron-sulfur (Fe-S) centers, to quinones in the respiratory chain. The immediate electron acceptor for the enzyme in this species is believed to be ubiquinone. Couples the redox reaction to proton translocation (for every two electrons transferred, four hydrogen ions are translocated across the cytoplasmic membrane), and thus conserves the redox energy in a proton gradient. This chain is NADH-quinone oxidoreductase subunit E (nuoE), found in Shigella flexneri.